A 223-amino-acid chain; its full sequence is Riboflavin kinase (223 aa).

Residues 1–89 (MHRINALKHL…KHIFCGDEDK (89 aa)) are unknown. The segment at 90 to 223 (VELYGNVITG…IMIEDRSACE (134 aa)) is riboflavin kinase. Position 99-104 (99-104 (GLGEGQ)) interacts with CDP. Mg(2+) is bound by residues Thr-128 and Asn-130. FMN is bound by residues Ser-185 and Glu-193. 198–201 (VHLR) is a binding site for CDP.

Belongs to the archaeal riboflavin kinase family. Mg(2+) serves as cofactor.

It carries out the reaction riboflavin + CTP = CDP + FMN + H(+). Its pathway is cofactor biosynthesis; FMN biosynthesis; FMN from riboflavin (CTP route): step 1/1. In terms of biological role, catalyzes the CTP-dependent phosphorylation of riboflavin (vitamin B2) to form flavin mononucleotide (FMN). The chain is Riboflavin kinase (ribK) from Methanococcoides burtonii (strain DSM 6242 / NBRC 107633 / OCM 468 / ACE-M).